A 201-amino-acid chain; its full sequence is Large ribosomal subunit protein uL4 (201 aa).

The tract at residues 44–73 (RAQKSRAEVKASRKKPWRQKGTGRARAGSV) is disordered. Residues 55-66 (SRKKPWRQKGTG) show a composition bias toward basic residues.

It belongs to the universal ribosomal protein uL4 family. Part of the 50S ribosomal subunit.

In terms of biological role, one of the primary rRNA binding proteins, this protein initially binds near the 5'-end of the 23S rRNA. It is important during the early stages of 50S assembly. It makes multiple contacts with different domains of the 23S rRNA in the assembled 50S subunit and ribosome. Forms part of the polypeptide exit tunnel. The chain is Large ribosomal subunit protein uL4 from Hamiltonella defensa subsp. Acyrthosiphon pisum (strain 5AT).